The sequence spans 60 residues: Large ribosomal subunit protein bL32 (60 aa).

Over residues 1-23 the composition is skewed to basic residues; that stretch reads MAKHPVPKKKTSKSKRDMRRSHH. The tract at residues 1 to 26 is disordered; it reads MAKHPVPKKKTSKSKRDMRRSHHALT.

Belongs to the bacterial ribosomal protein bL32 family.

The polypeptide is Large ribosomal subunit protein bL32 (Deinococcus deserti (strain DSM 17065 / CIP 109153 / LMG 22923 / VCD115)).